We begin with the raw amino-acid sequence, 260 residues long: 3'-5' ssDNA/RNA exonuclease TatD (260 aa).

The a divalent metal cation site is built by glutamate 91, histidine 127, and histidine 152.

Belongs to the metallo-dependent hydrolases superfamily. TatD-type hydrolase family. TatD subfamily. In terms of assembly, monomer. Mg(2+) serves as cofactor.

The protein resides in the cytoplasm. 3'-5' exonuclease that prefers single-stranded DNA and RNA. May play a role in the H(2)O(2)-induced DNA damage repair. The protein is 3'-5' ssDNA/RNA exonuclease TatD of Escherichia fergusonii (strain ATCC 35469 / DSM 13698 / CCUG 18766 / IAM 14443 / JCM 21226 / LMG 7866 / NBRC 102419 / NCTC 12128 / CDC 0568-73).